The primary structure comprises 413 residues: Isobutyryl-CoA dehydrogenase, mitochondrial (413 aa).

The transit peptide at 1-20 (MAMLRSGYRRFGCLRAALKS) directs the protein to the mitochondrion. K48 carries the post-translational modification N6-acetyllysine; alternate. K48 is subject to N6-succinyllysine; alternate. FAD contacts are provided by residues 156–165 (YCLTEPGSGS) and 189–191 (FIS). Residue S165 participates in substrate binding. The residue at position 211 (K211) is an N6-succinyllysine. Residue K229 is modified to N6-acetyllysine. An N6-succinyllysine modification is found at K269. Position 272–275 (272–275 (NGGR)) interacts with substrate. FAD contacts are provided by residues R300, 310–311 (SQ), and 369–373 (QMHGG). Catalysis depends on E396, which acts as the Proton acceptor. Residue 398–400 (SNE) participates in FAD binding. R408 lines the substrate pocket.

Belongs to the acyl-CoA dehydrogenase family. As to quaternary structure, homotetramer, formed by a dimer of dimers. Requires FAD as cofactor.

It is found in the mitochondrion. The catalysed reaction is 2-methylpropanoyl-CoA + oxidized [electron-transfer flavoprotein] + H(+) = 2-methylpropenoyl-CoA + reduced [electron-transfer flavoprotein]. It catalyses the reaction (2S)-2-methylbutanoyl-CoA + oxidized [electron-transfer flavoprotein] + H(+) = (2E)-2-methylbut-2-enoyl-CoA + reduced [electron-transfer flavoprotein]. It carries out the reaction propanoyl-CoA + oxidized [electron-transfer flavoprotein] + H(+) = acryloyl-CoA + reduced [electron-transfer flavoprotein]. The protein operates within amino-acid degradation; L-valine degradation. Its function is as follows. Isobutyryl-CoA dehydrogenase which catalyzes the conversion of 2-methylpropanoyl-CoA to (2E)-2-methylpropenoyl-CoA in the valine catabolic pathway. To a lesser extent, also able to catalyze the oxidation of (2S)-2-methylbutanoyl-CoA. This chain is Isobutyryl-CoA dehydrogenase, mitochondrial, found in Mus musculus (Mouse).